Reading from the N-terminus, the 236-residue chain is Protein-L-isoaspartate O-methyltransferase 1 (236 aa).

Residue S85 is part of the active site.

It belongs to the methyltransferase superfamily. L-isoaspartyl/D-aspartyl protein methyltransferase family.

The protein localises to the cytoplasm. It carries out the reaction [protein]-L-isoaspartate + S-adenosyl-L-methionine = [protein]-L-isoaspartate alpha-methyl ester + S-adenosyl-L-homocysteine. Its function is as follows. Catalyzes the methyl esterification of L-isoaspartyl residues in peptides and proteins that result from spontaneous decomposition of normal L-aspartyl and L-asparaginyl residues. It plays a role in the repair and/or degradation of damaged proteins. In Polaromonas sp. (strain JS666 / ATCC BAA-500), this protein is Protein-L-isoaspartate O-methyltransferase 1.